The following is a 441-amino-acid chain: Protein SPMIP7 (441 aa).

In terms of tissue distribution, testis specific. Expressed at the spermatid stage.

Functionally, essential for normal spermatogenesis. This Mus musculus (Mouse) protein is Protein SPMIP7 (Spmip7).